The primary structure comprises 384 residues: Gastrin-releasing peptide receptor (384 aa).

Residues 1-39 (MDPNNCSHLNLEVDPFLSCNNTFNQTLNPPKMDNWFHPG) lie on the Extracellular side of the membrane. N-linked (GlcNAc...) asparagine glycans are attached at residues N5, N20, and N24. The helical transmembrane segment at 40-63 (IIYVIPAVYGLIIVIGLIGNITLI) threads the bilayer. Topologically, residues 64–77 (KIFCTVKSMRNVPN) are cytoplasmic. Residues 78 to 97 (LFISSLALGDLLLLVTCAPV) form a helical membrane-spanning segment. The Extracellular segment spans residues 98 to 115 (DASKYLADRWLFGRIGCK). An intrachain disulfide couples C114 to C197. The chain crosses the membrane as a helical span at residues 116 to 137 (LIPFIQLTSVGVSVFTLTALSA). The Cytoplasmic segment spans residues 138-153 (DRYKAIVRPMDIQASH). Residues 154–175 (ALMKICLKAALIWIVSMLLAIP) traverse the membrane as a helical segment. Residues 176-209 (EAVFSDLHPFHVKDTNQTFISCAPYPHSNELHPK) lie on the Extracellular side of the membrane. A helical membrane pass occupies residues 210–235 (IHSMASFLVFYIIPLSIISVYYYFIA). Over 236–265 (RNLIQSAYNLPVEGNIHVKKQIESRKRLAK) the chain is Cytoplasmic. The helical transmembrane segment at 266-286 (TVLVFVGLFAFCWLPNHVIYL) threads the bilayer. Residues 287–299 (YRSYHYSEVDTSM) lie on the Extracellular side of the membrane. A helical transmembrane segment spans residues 300-326 (LHFITSICARLLAFTNSCVNPFALYLL). At 327-384 (SKSFRKQFNTQLLCCQPSLLNRSHSTGRSTTCMTSFKSTNPSATFSLINGNICHEGYV) the chain is on the cytoplasmic side. The S-palmitoyl cysteine moiety is linked to residue C340. S351 is subject to Phosphoserine.

Belongs to the G-protein coupled receptor 1 family. As to expression, expressed in the hippocampal CA1 region (at protein level).

The protein resides in the cell membrane. Functionally, receptor for gastrin-releasing peptide (GRP). Signals via association with G proteins that activate a phosphatidylinositol-calcium second messenger system, resulting in Akt phosphorylation. Contributes to the regulation of food intake. Contributes to the perception of prurient stimuli and transmission of itch signals in the spinal cord that promote scratching behavior, but does not play a role in the perception of pain. Contributes primarily to nonhistaminergic itch sensation. In one study, shown to act in the amygdala as part of an inhibitory network which inhibits memory specifically related to learned fear. In another study, shown to contribute to disinhibition of glutamatergic cells in the auditory cortex via signaling on vasoactive intestinal peptide-expressing cells which leads to enhanced auditory fear memories. Contributes to the induction of sighing through signaling in the pre-Botzinger complex, a cluster of several thousand neurons in the ventrolateral medulla responsible for inspiration during respiratory activity. This Rattus norvegicus (Rat) protein is Gastrin-releasing peptide receptor (Grpr).